A 276-amino-acid chain; its full sequence is Orotidine 5'-phosphate decarboxylase (276 aa).

The Proton donor role is filled by Lys-96.

Belongs to the OMP decarboxylase family. Type 2 subfamily.

The catalysed reaction is orotidine 5'-phosphate + H(+) = UMP + CO2. It participates in pyrimidine metabolism; UMP biosynthesis via de novo pathway; UMP from orotate: step 2/2. The protein is Orotidine 5'-phosphate decarboxylase of Porphyromonas gingivalis (strain ATCC BAA-308 / W83).